A 299-amino-acid polypeptide reads, in one-letter code: MAEFPASLLILNGKSTDNLPLREAIMLLREEGMTIHVRVTWEKGDAARYVEEARKLGVATVIAGGGDGTINEVSTALIQCEGDDIPALGILPLGTANDFATSVGIPEALDKALKLAIAGDAIAIDMAQVNKQTCFINMATGGFGTRITTETPEKLKAALGSVSYIIHGLMRMDTLQPDRCEIRGENFHWQGDALVIGIGNGRQAGGGQQLCPNALINDGLLQLRIFTGDEILPALVSTLKSDEDNPNIIEGASSWFDIQAPHDITFNLDGEPLSGQNFHIEILPAALRCRLPPDCPLLR.

The DAGKc domain maps to Ala2 to Thr133. ATP is bound by residues Thr40, Gly66–Glu72, and Thr95. Residues Leu215, Asp218, and Leu220 each contribute to the Mg(2+) site. Catalysis depends on Glu271, which acts as the Proton acceptor.

This sequence belongs to the diacylglycerol/lipid kinase family. YegS lipid kinase subfamily. Mg(2+) serves as cofactor. Requires Ca(2+) as cofactor.

It is found in the cytoplasm. In terms of biological role, probably phosphorylates lipids; the in vivo substrate is unknown. The polypeptide is Probable lipid kinase YegS (Escherichia coli O9:H4 (strain HS)).